Here is a 250-residue protein sequence, read N- to C-terminus: NAD(P)H-hydrate epimerase (250 aa).

In terms of domain architecture, YjeF N-terminal spans A14–K238. (6S)-NADPHX is bound at residue N74–D78. K(+)-binding residues include N75 and D143. (6S)-NADPHX-binding positions include G147–A154, Y159, and D180. S183 contacts K(+).

Belongs to the NnrE/AIBP family. Requires K(+) as cofactor.

The enzyme catalyses (6R)-NADHX = (6S)-NADHX. The catalysed reaction is (6R)-NADPHX = (6S)-NADPHX. Its function is as follows. Catalyzes the epimerization of the S- and R-forms of NAD(P)HX, a damaged form of NAD(P)H that is a result of enzymatic or heat-dependent hydration. This is a prerequisite for the S-specific NAD(P)H-hydrate dehydratase to allow the repair of both epimers of NAD(P)HX. In Thalassiosira pseudonana (Marine diatom), this protein is NAD(P)H-hydrate epimerase.